A 248-amino-acid polypeptide reads, in one-letter code: 14-3-3-like protein 2 (248 aa).

Belongs to the 14-3-3 family. In terms of assembly, interacts with daf-16. Interacts with sir-2.1. Interacts with hcf-1.

Its subcellular location is the cytoplasm. The protein resides in the nucleus. Its function is as follows. Required for extension of lifespan by sir-2.1. Required to modulate lifespan, in concert with hcf-1, acting redundantly with 14-3-3-like protein par-5. Promotes nuclear export of yap-1. Negatively regulates the transcriptional activity of daf-16 by sequestering it to the cytoplasm. This Caenorhabditis elegans protein is 14-3-3-like protein 2.